The following is a 566-amino-acid chain: Solute carrier family 22 member 16 (566 aa).

Residues 20–40 (FASAFQTISCGIHYLASVFIA) form a helical membrane-spanning segment. 3 N-linked (GlcNAc...) asparagine glycosylation sites follow: Asn52, Asn60, and Asn112. The next 5 helical transmembrane spans lie at 149–169 (LIQP…GDIA), 176–196 (PIIW…AFTF), 201–221 (FVIV…VVFV), 237–257 (MHVH…GFLV), and 261–281 (WIYQ…CWML). Asn344 carries an N-linked (GlcNAc...) asparagine glycan. 6 consecutive transmembrane segments (helical) span residues 351 to 371 (TITV…FALN), 381 to 401 (LNLF…CLGM), 408 to 428 (NTLA…MLIP), 436 to 456 (IAMS…IYLY), 468 to 488 (LAVG…PFCV), and 493 to 513 (VWIF…GILT).

It belongs to the major facilitator (TC 2.A.1) superfamily. Organic cation transporter (TC 2.A.1.19) family.

The protein resides in the membrane. Functionally, high affinity carnitine transporter. In Xenopus laevis (African clawed frog), this protein is Solute carrier family 22 member 16 (slc22a16).